Here is a 564-residue protein sequence, read N- to C-terminus: MNSHEILLILAFFALVLVPAPFLGRYCFKVMEGQRNLLSAPLAPLERVCYRLFGVDPASEQDWKTYTLALLAFNLAGLVLLFSILMLQGSLPLNPQHLPGLEWTLAFNTAVSFVTNTNWQAYSGEASLSYFSQMVGLTVQNFVSAAVGLCVLVALARGISRRSTRQLGNFWVDLTRGTLYVLLPLCLLLALLLVWQGVPQTFFDYVHATTLQGAEQTIPLGPAASQIAIKQLGTNGGGFFGVNSTHPFENPSAWSNLFEVASIILIPAALVFTFGHYVKDLRQSRAILGCMLLLFCLGLGLSLWAEYQPNPALAQLPIEQGAPMEGKESRFGTAASMLWAITTTAASNGSVNAMHDSLSPLGGMLPLLNMMLGEVIFGGVGAGLYGMLLFVLIAVFLAGLMVGRTPEYLGKKLEAKEVRLLVFTLLVMPVGVLVLGAIAASLPGPASAVTNPGPHGFSQLLYAYTSGSANNGSAFAGFGANTPFHNLMIGLAMLIGRFGYILPILAIAGSLAAKKASPVGPNSFPTHGPLFVSLLTVTILLVGGLTFLPTLALGPIAEQLSLGF.

Transmembrane regions (helical) follow at residues 4-24, 67-87, 135-155, 179-199, 258-278, 286-306, 376-396, 420-440, 487-507, and 528-548; these read HEIL…PFLG, TLAL…ILML, VGLT…LVAL, LYVL…QGVP, FEVA…GHYV, AILG…LWAE, IFGG…IAVF, LLVF…AIAA, LMIG…ILAI, and GPLF…LTFL.

It belongs to the KdpA family. The system is composed of three essential subunits: KdpA, KdpB and KdpC.

It localises to the cell inner membrane. Part of the high-affinity ATP-driven potassium transport (or Kdp) system, which catalyzes the hydrolysis of ATP coupled with the electrogenic transport of potassium into the cytoplasm. This subunit binds the periplasmic potassium ions and delivers the ions to the membrane domain of KdpB through an intramembrane tunnel. The polypeptide is Potassium-transporting ATPase potassium-binding subunit (Pseudomonas aeruginosa (strain ATCC 15692 / DSM 22644 / CIP 104116 / JCM 14847 / LMG 12228 / 1C / PRS 101 / PAO1)).